The sequence spans 58 residues: Large ribosomal subunit protein uL30 (58 aa).

This sequence belongs to the universal ribosomal protein uL30 family. As to quaternary structure, part of the 50S ribosomal subunit.

The polypeptide is Large ribosomal subunit protein uL30 (Pseudomonas putida (strain W619)).